The chain runs to 199 residues: Pyridoxal 5'-phosphate synthase subunit PdxT (199 aa).

49 to 51 serves as a coordination point for L-glutamine; it reads GES. Cys81 acts as the Nucleophile in catalysis. L-glutamine is bound by residues Arg110 and 139–140; that span reads IR. Active-site charge relay system residues include His175 and Glu177.

Belongs to the glutaminase PdxT/SNO family. In the presence of PdxS, forms a dodecamer of heterodimers. Only shows activity in the heterodimer.

It catalyses the reaction aldehydo-D-ribose 5-phosphate + D-glyceraldehyde 3-phosphate + L-glutamine = pyridoxal 5'-phosphate + L-glutamate + phosphate + 3 H2O + H(+). The catalysed reaction is L-glutamine + H2O = L-glutamate + NH4(+). The protein operates within cofactor biosynthesis; pyridoxal 5'-phosphate biosynthesis. Its function is as follows. Catalyzes the hydrolysis of glutamine to glutamate and ammonia as part of the biosynthesis of pyridoxal 5'-phosphate. The resulting ammonia molecule is channeled to the active site of PdxS. This Frankia casuarinae (strain DSM 45818 / CECT 9043 / HFP020203 / CcI3) protein is Pyridoxal 5'-phosphate synthase subunit PdxT.